Here is a 451-residue protein sequence, read N- to C-terminus: Aminodeoxychorismate synthase component 1 (451 aa).

Residues serine 34, 41-44, and 238-240 contribute to the L-tryptophan site; these read HNRF and PFS. Catalysis depends on glutamate 256, which acts as the Proton donor. Lysine 272 serves as the catalytic N6-(4-deoxychorismate)-lysine intermediate.

The protein belongs to the anthranilate synthase component I family. In terms of assembly, monomer. Heterodimer consisting of two non-identical subunits: a glutamine amidotransferase subunit (PabA) and a aminodeoxychorismate synthase subunit (PabB). It depends on Mg(2+) as a cofactor.

The catalysed reaction is chorismate + L-glutamine = 4-amino-4-deoxychorismate + L-glutamate. Its pathway is cofactor biosynthesis; tetrahydrofolate biosynthesis; 4-aminobenzoate from chorismate: step 1/2. Its function is as follows. Part of a heterodimeric complex that catalyzes the two-step biosynthesis of 4-amino-4-deoxychorismate (ADC), a precursor of p-aminobenzoate (PABA) and tetrahydrofolate. In the first step, a glutamine amidotransferase (PabA) generates ammonia as a substrate that, along with chorismate, is used in the second step, catalyzed by aminodeoxychorismate synthase (PabB) to produce ADC. This is Aminodeoxychorismate synthase component 1 (pabB) from Klebsiella aerogenes (Enterobacter aerogenes).